Consider the following 233-residue polypeptide: Transcriptional regulatory protein WalR (233 aa).

The Response regulatory domain maps to Lys-4–Leu-117. Asp-53 carries the post-translational modification 4-aspartylphosphate. Positions Thr-132–Gln-231 form a DNA-binding region, ompR/PhoB-type.

In terms of processing, phosphorylated by WalK.

It is found in the cytoplasm. Its function is as follows. Member of the two-component regulatory system WalK/WalR. This chain is Transcriptional regulatory protein WalR (walR), found in Staphylococcus haemolyticus (strain JCSC1435).